The sequence spans 325 residues: Short chain isoprenyl diphosphate synthase (325 aa).

Residues Lys-44, Arg-47, and His-76 each contribute to the isopentenyl diphosphate site. Residues Asp-83 and Asp-87 each coordinate Mg(2+). Arg-92 lines the an all-trans-polyprenyl diphosphate pocket. Arg-93 contributes to the isopentenyl diphosphate binding site. Positions 173, 174, 211, 228, and 238 each coordinate an all-trans-polyprenyl diphosphate.

This sequence belongs to the FPP/GGPP synthase family. As to quaternary structure, homodimer. The cofactor is Mg(2+).

It is found in the cytoplasm. The polypeptide is Short chain isoprenyl diphosphate synthase (idsA) (Methanothermobacter thermautotrophicus (strain ATCC 29096 / DSM 1053 / JCM 10044 / NBRC 100330 / Delta H) (Methanobacterium thermoautotrophicum)).